The sequence spans 491 residues: Cysteine--tRNA ligase (491 aa).

A Zn(2+)-binding site is contributed by Cys-31. A 'HIGH' region motif is present at residues 33 to 43; the sequence is PTVYGDAHLGH. Positions 226, 251, and 255 each coordinate Zn(2+). Positions 283 to 287 match the 'KMSKS' region motif; the sequence is KMGKS. Lys-286 lines the ATP pocket.

Belongs to the class-I aminoacyl-tRNA synthetase family. Monomer. It depends on Zn(2+) as a cofactor.

Its subcellular location is the cytoplasm. The enzyme catalyses tRNA(Cys) + L-cysteine + ATP = L-cysteinyl-tRNA(Cys) + AMP + diphosphate. This chain is Cysteine--tRNA ligase, found in Parabacteroides distasonis (strain ATCC 8503 / DSM 20701 / CIP 104284 / JCM 5825 / NCTC 11152).